The chain runs to 638 residues: Threonine--tRNA ligase (638 aa).

The TGS domain maps to 1–61; the sequence is MPDIKLPDGS…EQNADLAIIT (61 aa). The catalytic stretch occupies residues 242–533; that stretch reads DHRRLGKQYD…LIENFAGALP (292 aa). C333, H384, and H510 together coordinate Zn(2+).

This sequence belongs to the class-II aminoacyl-tRNA synthetase family. Homodimer. Requires Zn(2+) as cofactor.

The protein resides in the cytoplasm. It carries out the reaction tRNA(Thr) + L-threonine + ATP = L-threonyl-tRNA(Thr) + AMP + diphosphate + H(+). Functionally, catalyzes the attachment of threonine to tRNA(Thr) in a two-step reaction: L-threonine is first activated by ATP to form Thr-AMP and then transferred to the acceptor end of tRNA(Thr). Also edits incorrectly charged L-seryl-tRNA(Thr). The chain is Threonine--tRNA ligase from Dechloromonas aromatica (strain RCB).